Reading from the N-terminus, the 432-residue chain is Aspartate aminotransferase (432 aa).

45-46 (RG) is a substrate binding site. Residue 109–111 (SSL) coordinates pyridoxal 5'-phosphate. A substrate-binding site is contributed by 148–150 (YDR). Pyridoxal 5'-phosphate is bound by residues asparagine 197, tyrosine 229, and 262–265 (STSK). Arginine 400 provides a ligand contact to substrate.

Belongs to the class-I pyridoxal-phosphate-dependent aminotransferase family. As to quaternary structure, homodimer. Requires pyridoxal 5'-phosphate as cofactor.

The enzyme catalyses L-aspartate + 2-oxoglutarate = oxaloacetate + L-glutamate. This is Aspartate aminotransferase from Corynebacterium glutamicum (strain ATCC 13032 / DSM 20300 / JCM 1318 / BCRC 11384 / CCUG 27702 / LMG 3730 / NBRC 12168 / NCIMB 10025 / NRRL B-2784 / 534).